The primary structure comprises 120 residues: uncharacterized protein (120 aa).

This is an uncharacterized protein from Bacillus subtilis (strain 168).